The sequence spans 95 residues: MSRSTKKGPFVDVRLLSRVETMNRGNEKRPLKTWSRDSTIFPQMVGHTIAVHDGRRHVPVYITENMVGHKLGEFAPTRTFRGHGGKKADKRGKLK.

Residues 76 to 95 (PTRTFRGHGGKKADKRGKLK) are disordered. A compositionally biased stretch (basic residues) spans 80 to 95 (FRGHGGKKADKRGKLK).

Belongs to the universal ribosomal protein uS19 family.

Functionally, protein S19 forms a complex with S13 that binds strongly to the 16S ribosomal RNA. The chain is Small ribosomal subunit protein uS19 from Herpetosiphon aurantiacus (strain ATCC 23779 / DSM 785 / 114-95).